A 125-amino-acid polypeptide reads, in one-letter code: Large ribosomal subunit protein bL12 (125 aa).

It belongs to the bacterial ribosomal protein bL12 family. As to quaternary structure, homodimer. Part of the ribosomal stalk of the 50S ribosomal subunit. Forms a multimeric L10(L12)X complex, where L10 forms an elongated spine to which 2 to 4 L12 dimers bind in a sequential fashion. Binds GTP-bound translation factors.

Functionally, forms part of the ribosomal stalk which helps the ribosome interact with GTP-bound translation factors. Is thus essential for accurate translation. The protein is Large ribosomal subunit protein bL12 of Syntrophomonas wolfei subsp. wolfei (strain DSM 2245B / Goettingen).